Reading from the N-terminus, the 343-residue chain is 4-hydroxy-2-oxovalerate aldolase 2 (343 aa).

Residues 5-255 form the Pyruvate carboxyltransferase domain; that stretch reads ITIVDTTLRD…DTGVDLFPLI (251 aa). Substrate contacts are provided by residues 13-14, S167, and H194; that span reads RD. D14 contacts Mn(2+). 2 residues coordinate Mn(2+): H194 and H196. Y285 contacts substrate.

It belongs to the 4-hydroxy-2-oxovalerate aldolase family.

It catalyses the reaction (S)-4-hydroxy-2-oxopentanoate = acetaldehyde + pyruvate. This chain is 4-hydroxy-2-oxovalerate aldolase 2, found in Rhodococcus jostii (strain RHA1).